A 631-amino-acid chain; its full sequence is ATP-dependent RNA helicase mrh4, mitochondrial (631 aa).

A mitochondrion-targeting transit peptide spans 1 to 45 (MNRLGRLPLPLPPSVCLFCRFRATASLPSSLQATRSMATARLRRR). A disordered region spans residues 68 to 112 (KERFGPFAGMNQTEARIRETPRARSRAAQKRSGEPEEDSQKESPL). Residues 98-108 (RSGEPEEDSQK) show a composition bias toward basic and acidic residues. Positions 141–174 (TSFDQFQLLPVVRNSISSQALPGLVDVTPTPIQR) match the Q motif motif. A compositionally biased stretch (basic and acidic residues) spans 180–193 (LLEEPKTEKKPTKA). Positions 180–199 (LLEEPKTEKKPTKADDDEPR) are disordered. Residues 194–406 (DDDEPRYDQY…RKRYPDIKRL (213 aa)) enclose the Helicase ATP-binding domain. 207–214 (AETGSGKT) serves as a coordination point for ATP. Residues 229-249 (EARDKELEKKEQEEKAREREE) are disordered. The DEAD box signature appears at 353–356 (DEAD). The Helicase C-terminal domain occupies 455 to 631 (GPYASYVAPK…EGMFRGQALI (177 aa)).

The protein belongs to the DEAD box helicase family. MRH4 subfamily.

It is found in the mitochondrion. It carries out the reaction ATP + H2O = ADP + phosphate + H(+). In terms of biological role, ATP-binding RNA helicase involved in mitochondrial RNA metabolism. Required for maintenance of mitochondrial DNA. This chain is ATP-dependent RNA helicase mrh4, mitochondrial (mrh4), found in Aspergillus fumigatus (strain ATCC MYA-4609 / CBS 101355 / FGSC A1100 / Af293) (Neosartorya fumigata).